Consider the following 120-residue polypeptide: V-type proton ATPase subunit F (120 aa).

Belongs to the V-ATPase F subunit family. V-ATPase is a heteromultimeric enzyme composed of a peripheral catalytic V1 complex (components A to H) attached to an integral membrane V0 proton pore complex (components: a, c, c', c'' and d).

Functionally, subunit of the peripheral V1 complex of vacuolar ATPase essential for assembly or catalytic function. V-ATPase is responsible for acidifying a variety of intracellular compartments in eukaryotic cells. The protein is V-type proton ATPase subunit F (vatF) of Dictyostelium discoideum (Social amoeba).